A 127-amino-acid chain; its full sequence is UPF0166 protein PYRAB06660 (127 aa).

The protein belongs to the UPF0166 family.

This Pyrococcus abyssi (strain GE5 / Orsay) protein is UPF0166 protein PYRAB06660.